The sequence spans 98 residues: Small ribosomal subunit protein bS16 (98 aa).

Belongs to the bacterial ribosomal protein bS16 family.

This chain is Small ribosomal subunit protein bS16, found in Pseudothermotoga lettingae (strain ATCC BAA-301 / DSM 14385 / NBRC 107922 / TMO) (Thermotoga lettingae).